Consider the following 836-residue polypeptide: Serine/threonine-protein kinase ppk5 (836 aa).

Disordered regions lie at residues 1–29 (MVGL…FLSP), 192–214 (INQL…TLSS), 230–307 (CSQF…YKSI), and 328–381 (TPLD…ERQN). 3 stretches are compositionally biased toward polar residues: residues 192 to 205 (INQL…TNYP), 232 to 241 (QFASPRSSIV), and 265 to 288 (KPSN…TKLT). Basic and acidic residues predominate over residues 289 to 298 (SQRDNDHQKD). Positions 338 to 347 (SGKKFNKNSK) are enriched in basic residues. A compositionally biased stretch (low complexity) spans 353 to 362 (STISSYSSAS). The 297-residue stretch at 518-814 (YEIIDTVGKG…VDSALQHEFI (297 aa)) folds into the Protein kinase domain. ATP is bound by residues 524–532 (VGKGSFGQV) and Lys-547. Catalysis depends on Asp-644, which acts as the Proton acceptor. Position 678 is a phosphotyrosine (Tyr-678).

This sequence belongs to the protein kinase superfamily. CMGC Ser/Thr protein kinase family. MNB/DYRK subfamily.

It is found in the cytoplasm. The enzyme catalyses L-seryl-[protein] + ATP = O-phospho-L-seryl-[protein] + ADP + H(+). It catalyses the reaction L-threonyl-[protein] + ATP = O-phospho-L-threonyl-[protein] + ADP + H(+). Its function is as follows. Has a role in meiosis. In Schizosaccharomyces pombe (strain 972 / ATCC 24843) (Fission yeast), this protein is Serine/threonine-protein kinase ppk5 (ppk5).